Consider the following 358-residue polypeptide: Gentisate 1,2-dioxygenase (358 aa).

Residues 99 to 165 (QYLGPREVAP…VTDEPMAWLD (67 aa)) form the Cupin type-2 domain. The segment at 185-215 (DELSTRETPERSRGERLWGHPGLRPIGRPDQ) is disordered. The span at 187-202 (LSTRETPERSRGERLW) shows a compositional bias: basic and acidic residues.

The protein belongs to the gentisate 1,2-dioxygenase family.

The catalysed reaction is 2,5-dihydroxybenzoate + O2 = 3-maleylpyruvate + H(+). Involved in the degradation of salicylate via a pathway involving coenzyme A derivative. Catalyzes the oxygen-dependent ring fission of gentisate between the carboxyl and proximal hydroxyl groups at positions 1 and 2 of the aromatic ring to form maleylpyruvate. The substrate specificity is strong, since salicylate, catechol, protocatechuic acid, homogenetisate, 2,3-dihydroxybenzoate or 5-aminosalicylate cannot substitute for gentisate in the ring cleavage reaction. The protein is Gentisate 1,2-dioxygenase of Streptomyces sp.